A 69-amino-acid chain; its full sequence is DNA-directed RNA polymerase subunit omega (69 aa).

It belongs to the RNA polymerase subunit omega family. The RNAP catalytic core consists of 2 alpha, 1 beta, 1 beta' and 1 omega subunit. When a sigma factor is associated with the core the holoenzyme is formed, which can initiate transcription.

The enzyme catalyses RNA(n) + a ribonucleoside 5'-triphosphate = RNA(n+1) + diphosphate. Its function is as follows. Promotes RNA polymerase assembly. Latches the N- and C-terminal regions of the beta' subunit thereby facilitating its interaction with the beta and alpha subunits. The polypeptide is DNA-directed RNA polymerase subunit omega (Heliobacterium modesticaldum (strain ATCC 51547 / Ice1)).